We begin with the raw amino-acid sequence, 151 residues long: Large ribosomal subunit protein eL19 (151 aa).

A disordered region spans residues 62-93 (RLKERRKKRSLKSEGKKSGSRKGKKGARANSK). Over residues 79–88 (SGSRKGKKGA) the composition is skewed to basic residues.

The protein belongs to the eukaryotic ribosomal protein eL19 family. Part of the 50S ribosomal subunit.

In terms of biological role, binds to the 23S rRNA. The sequence is that of Large ribosomal subunit protein eL19 from Saccharolobus solfataricus (strain ATCC 35092 / DSM 1617 / JCM 11322 / P2) (Sulfolobus solfataricus).